Consider the following 424-residue polypeptide: Imidazolonepropionase (424 aa).

The Fe(3+) site is built by histidine 81 and histidine 83. Positions 81 and 83 each coordinate Zn(2+). 4-imidazolone-5-propanoate is bound by residues arginine 90, tyrosine 153, and histidine 186. Tyrosine 153 provides a ligand contact to N-formimidoyl-L-glutamate. Histidine 251 provides a ligand contact to Fe(3+). Zn(2+) is bound at residue histidine 251. Glutamate 254 serves as a coordination point for 4-imidazolone-5-propanoate. Residue aspartate 325 coordinates Fe(3+). Aspartate 325 is a Zn(2+) binding site. N-formimidoyl-L-glutamate is bound by residues asparagine 327 and glycine 329. Threonine 330 contacts 4-imidazolone-5-propanoate.

It belongs to the metallo-dependent hydrolases superfamily. HutI family. It depends on Zn(2+) as a cofactor. Fe(3+) is required as a cofactor.

The protein resides in the cytoplasm. It carries out the reaction 4-imidazolone-5-propanoate + H2O = N-formimidoyl-L-glutamate. It functions in the pathway amino-acid degradation; L-histidine degradation into L-glutamate; N-formimidoyl-L-glutamate from L-histidine: step 3/3. Functionally, catalyzes the hydrolytic cleavage of the carbon-nitrogen bond in imidazolone-5-propanoate to yield N-formimidoyl-L-glutamate. It is the third step in the universal histidine degradation pathway. The chain is Imidazolonepropionase from Syntrophobacter fumaroxidans (strain DSM 10017 / MPOB).